Here is a 424-residue protein sequence, read N- to C-terminus: Zinc finger protein 597 (424 aa).

The 75-residue stretch at 14–88 (ILFEDLAVYF…KYPIAAPLVP (75 aa)) folds into the KRAB domain. 4 C2H2-type zinc fingers span residues 156-178 (YKCP…QKIH), 184-206 (HKCG…RRIH), 212-234 (YKCA…MNSH), and 240-262 (YTCS…QKSH). Residue K300 forms a Glycyl lysine isopeptide (Lys-Gly) (interchain with G-Cter in SUMO2) linkage. 3 C2H2-type zinc fingers span residues 341 to 363 (LQCP…QNIH), 369 to 391 (HKCK…QKSH), and 397 to 419 (FKCT…KRTH).

This sequence belongs to the krueppel C2H2-type zinc-finger protein family.

Its subcellular location is the nucleus. Its function is as follows. May be involved in transcriptional regulation. The polypeptide is Zinc finger protein 597 (ZNF597) (Homo sapiens (Human)).